Reading from the N-terminus, the 77-residue chain is Translation initiation factor IF-1, chloroplastic (77 aa).

In terms of domain architecture, S1-like spans 1-71 (MKEQKWTHEG…TRGRIIYRLR (71 aa)).

It belongs to the IF-1 family. In terms of assembly, component of the 30S ribosomal translation pre-initiation complex which assembles on the 30S ribosome in the order IF-2 and IF-3, IF-1 and N-formylmethionyl-tRNA(fMet); mRNA recruitment can occur at any time during PIC assembly.

It localises to the plastid. The protein localises to the chloroplast. Functionally, one of the essential components for the initiation of protein synthesis. Stabilizes the binding of IF-2 and IF-3 on the 30S subunit to which N-formylmethionyl-tRNA(fMet) subsequently binds. Helps modulate mRNA selection, yielding the 30S pre-initiation complex (PIC). Upon addition of the 50S ribosomal subunit IF-1, IF-2 and IF-3 are released leaving the mature 70S translation initiation complex. This is Translation initiation factor IF-1, chloroplastic from Coffea arabica (Arabian coffee).